Reading from the N-terminus, the 21-residue chain is Trypsin (21 aa).

This sequence belongs to the peptidase S1 family.

The protein resides in the secreted. It is found in the extracellular space. The catalysed reaction is Preferential cleavage: Arg-|-Xaa, Lys-|-Xaa.. The protein is Trypsin of Apis mellifera scutellata (Africanized honey bee).